A 346-amino-acid chain; its full sequence is G-protein coupled receptor 42 (346 aa).

Residues M1–S19 lie on the Extracellular side of the membrane. The chain crosses the membrane as a helical span at residues V20 to V40. Topologically, residues G41 to P47 are cytoplasmic. Residues V48–L68 traverse the membrane as a helical segment. Residues P69 to L90 lie on the Extracellular side of the membrane. Residues S91–I111 form a helical membrane-spanning segment. At E112–A132 the chain is on the cytoplasmic side. A helical membrane pass occupies residues G133–I153. The Extracellular portion of the chain corresponds to E154–L178. A glycan (N-linked (GlcNAc...) asparagine) is linked at N166. The chain crosses the membrane as a helical span at residues A179 to I199. Over T200 to R222 the chain is Cytoplasmic. The chain crosses the membrane as a helical span at residues V223–V243. Residues S244 to R258 are Extracellular-facing. The helical transmembrane segment at I259–S279 threads the bilayer. The Cytoplasmic segment spans residues S280–N346. A compositionally biased stretch (basic and acidic residues) spans M307–E330. The segment at M307–N346 is disordered.

This sequence belongs to the G-protein coupled receptor 1 family.

The protein localises to the cell membrane. G protein-coupled receptor that is activated by short chain fatty acids (SCFAs), such as propionate. Hence may play a role in the regulation of whole-body energy homeostasis and/or in intestinal immunity. The chain is G-protein coupled receptor 42 (GPR42) from Homo sapiens (Human).